Here is an 892-residue protein sequence, read N- to C-terminus: Translation initiation factor IF-2 (892 aa).

Residues 138-185 (QRNLAEQQRLAEVDRQRVEEQERKRREEEQAELERQKTESRVVEEILV) show a composition bias toward basic and acidic residues. Disordered regions lie at residues 138-250 (QRNL…EDDS) and 262-298 (AAERARRGSNTRGKGGGSHRSATHRGNENSIRSSGAH). Residues 207–219 (LPRTVRPTPAARP) show a composition bias toward low complexity. The tr-type G domain occupies 391–560 (PRPPVVTIMG…SIQAEVLELK (170 aa)). GTP is bound by residues 400–407 (GHVDHGKT), 446–450 (DTPGH), and 500–503 (SKID).

Belongs to the TRAFAC class translation factor GTPase superfamily. Classic translation factor GTPase family. IF-2 subfamily.

It is found in the cytoplasm. In terms of biological role, one of the essential components for the initiation of protein synthesis. Protects formylmethionyl-tRNA from spontaneous hydrolysis and promotes its binding to the 30S ribosomal subunits. Also involved in the hydrolysis of GTP during the formation of the 70S ribosomal complex. In Xylella fastidiosa (strain Temecula1 / ATCC 700964), this protein is Translation initiation factor IF-2.